The primary structure comprises 398 residues: Probable aminomethyltransferase (398 aa).

The protein belongs to the GcvT family. In terms of assembly, the glycine cleavage system is composed of four proteins: P, T, L and H.

The enzyme catalyses N(6)-[(R)-S(8)-aminomethyldihydrolipoyl]-L-lysyl-[protein] + (6S)-5,6,7,8-tetrahydrofolate = N(6)-[(R)-dihydrolipoyl]-L-lysyl-[protein] + (6R)-5,10-methylene-5,6,7,8-tetrahydrofolate + NH4(+). The glycine cleavage system catalyzes the degradation of glycine. This Pyrococcus furiosus (strain ATCC 43587 / DSM 3638 / JCM 8422 / Vc1) protein is Probable aminomethyltransferase.